A 447-amino-acid polypeptide reads, in one-letter code: Glycogen synthase (447 aa).

Residue Arg15 participates in ADP-alpha-D-glucose binding.

This sequence belongs to the glycosyltransferase 1 family. Bacterial/plant glycogen synthase subfamily.

It catalyses the reaction [(1-&gt;4)-alpha-D-glucosyl](n) + ADP-alpha-D-glucose = [(1-&gt;4)-alpha-D-glucosyl](n+1) + ADP + H(+). Its pathway is glycan biosynthesis; glycogen biosynthesis. Functionally, synthesizes alpha-1,4-glucan chains using ADP-glucose. The chain is Glycogen synthase from Deinococcus geothermalis (strain DSM 11300 / CIP 105573 / AG-3a).